The primary structure comprises 355 residues: Protein MxiC (355 aa).

It localises to the secreted. It is found in the host cell. Necessary for the secretion of IPA invasins. The polypeptide is Protein MxiC (mxiC) (Shigella flexneri).